Reading from the N-terminus, the 836-residue chain is Glutamate receptor ionotropic, kainate glr-3 (836 aa).

Positions 1–19 (MFWIAKTLIAFLILLKTDC) are cleaved as a signal peptide. The Extracellular segment spans residues 20-523 (YKIAIPANLI…WFKFMDPLST (504 aa)). The cysteines at positions 76 and 320 are disulfide-linked. Asn-225, Asn-257, Asn-356, Asn-391, and Asn-419 each carry an N-linked (GlcNAc...) asparagine glycan. L-glutamate-binding positions include 478–480 (SLT) and Arg-485. A helical transmembrane segment spans residues 524 to 544 (QVWIMTFASYFVVSVAIWIIA). The Cytoplasmic portion of the chain corresponds to 545-600 (KISPYEQFERDEDNGQYKPVDNQFSLRNSFWFTVCSLMQQGSELCPRAASTRLLTG). The chain crosses the membrane as a helical span at residues 601 to 621 (IWWFFALILISSYTANLAAVL). Residues 622 to 780 (TTRRMETPIE…KRKDQDDGES (159 aa)) lie on the Extracellular side of the membrane. 651 to 652 (ST) is an L-glutamate binding site. The N-linked (GlcNAc...) asparagine glycan is linked to Asn-657. L-glutamate is bound at residue Glu-699. A helical transmembrane segment spans residues 781 to 801 (IGGIFIILVVGLVLTAVLVIF). The Cytoplasmic portion of the chain corresponds to 802–836 (ELITTRKPSPAQSQVIRHVNVIPSFKLGFFRWNVN).

Belongs to the glutamate-gated ion channel (TC 1.A.10.1) family. As to expression, expressed in the intestine and in the ASER neuron. Also expressed in the thermosensitive RIA interneuron.

It localises to the cell membrane. Its subcellular location is the postsynaptic cell membrane. With respect to regulation, activated by low temperature of 18 degrees Celsius in ASER neuron. Functionally, ionotropic glutamate receptor. Activation by glutamate requires additional verification. L-glutamate acts as an excitatory neurotransmitter at many synapses in the central nervous system. Binding of the excitatory neurotransmitter L-glutamate induces a conformation change, leading to the opening of the cation channel, and thereby converts the chemical signal to an electrical impulse. The receptor then desensitizes rapidly and enters a transient inactive state, characterized by the presence of bound agonist. Its function is as follows. Independent of its ionotropic glutamate receptor activity, acts as a thermoreceptor in the ASER neuron where it triggers a calcium response to activate cold avoidance behavior in response to temperatures below 19 degrees Celsius. Possibly functions as a metabotropic cold receptor and acts upstream of the G(o) G protein goa-1 in the ASER neuron. Also functions in cold sensing in the intestine. This Caenorhabditis elegans protein is Glutamate receptor ionotropic, kainate glr-3.